We begin with the raw amino-acid sequence, 258 residues long: uncharacterized protein (258 aa).

Positions methionine 1 to serine 19 are cleaved as a signal peptide.

This is an uncharacterized protein from Escherichia coli (strain K12).